Reading from the N-terminus, the 354-residue chain is UDP-N-acetylglucosamine--N-acetylmuramyl-(pentapeptide) pyrophosphoryl-undecaprenol N-acetylglucosamine transferase 3 (354 aa).

UDP-N-acetyl-alpha-D-glucosamine contacts are provided by residues 12-14, R163, S193, and Q287; that span reads TAG.

It belongs to the glycosyltransferase 28 family. MurG subfamily.

It localises to the cell membrane. The enzyme catalyses di-trans,octa-cis-undecaprenyl diphospho-N-acetyl-alpha-D-muramoyl-L-alanyl-D-glutamyl-meso-2,6-diaminopimeloyl-D-alanyl-D-alanine + UDP-N-acetyl-alpha-D-glucosamine = di-trans,octa-cis-undecaprenyl diphospho-[N-acetyl-alpha-D-glucosaminyl-(1-&gt;4)]-N-acetyl-alpha-D-muramoyl-L-alanyl-D-glutamyl-meso-2,6-diaminopimeloyl-D-alanyl-D-alanine + UDP + H(+). Its pathway is cell wall biogenesis; peptidoglycan biosynthesis. Cell wall formation. Catalyzes the transfer of a GlcNAc subunit on undecaprenyl-pyrophosphoryl-MurNAc-pentapeptide (lipid intermediate I) to form undecaprenyl-pyrophosphoryl-MurNAc-(pentapeptide)GlcNAc (lipid intermediate II). The chain is UDP-N-acetylglucosamine--N-acetylmuramyl-(pentapeptide) pyrophosphoryl-undecaprenol N-acetylglucosamine transferase 3 from Bacillus cereus (strain ATCC 14579 / DSM 31 / CCUG 7414 / JCM 2152 / NBRC 15305 / NCIMB 9373 / NCTC 2599 / NRRL B-3711).